The primary structure comprises 132 residues: Large ribosomal subunit protein eL28 (132 aa).

This sequence belongs to the eukaryotic ribosomal protein eL28 family.

In Dictyostelium discoideum (Social amoeba), this protein is Large ribosomal subunit protein eL28 (rpl28).